The sequence spans 106 residues: UPF0060 membrane protein RL1530 (106 aa).

4 helical membrane passes run Ile4 to Leu24, Val30 to Val50, Thr58 to Glu78, and Asp86 to Gly106.

Belongs to the UPF0060 family.

It is found in the cell inner membrane. The sequence is that of UPF0060 membrane protein RL1530 from Rhizobium johnstonii (strain DSM 114642 / LMG 32736 / 3841) (Rhizobium leguminosarum bv. viciae).